Consider the following 227-residue polypeptide: Cytidylate kinase (227 aa).

12-20 (GPSGAGKGT) is an ATP binding site.

This sequence belongs to the cytidylate kinase family. Type 1 subfamily.

It localises to the cytoplasm. It catalyses the reaction CMP + ATP = CDP + ADP. The enzyme catalyses dCMP + ATP = dCDP + ADP. This Salmonella typhimurium (strain LT2 / SGSC1412 / ATCC 700720) protein is Cytidylate kinase.